Reading from the N-terminus, the 106-residue chain is Iron-sulfur cluster assembly protein CyaY (106 aa).

This sequence belongs to the frataxin family.

Functionally, involved in iron-sulfur (Fe-S) cluster assembly. May act as a regulator of Fe-S biogenesis. The polypeptide is Iron-sulfur cluster assembly protein CyaY (Salmonella schwarzengrund (strain CVM19633)).